The sequence spans 225 residues: Insulin-induced gene 2 protein (225 aa).

Residues 1–28 (MAEGETKSPGPKKCGPYISSVTSQSVNL) are Cytoplasmic-facing. A helical transmembrane segment spans residues 29-51 (MIRGVVLFFIGVFLALVLNLLQI). Residues 52 to 70 (QRNVTLFPPDVIASIFSSA) are Lumenal-facing. Residues 71-88 (WWVPPCCGTASAVIGLLY) form a helical membrane-spanning segment. Residues 89-103 (PCIDRHLGEPHKFKR) are Cytoplasmic-facing. A helical transmembrane segment spans residues 104-126 (EWSSVMRCVAVFVGINHASAKVD). Over 127-129 (FDN) the chain is Lumenal. The helical transmembrane segment at 130–148 (NIQLSLTLAALSIGLWWTF) threads the bilayer. Topologically, residues 149–153 (DRSRS) are cytoplasmic. At Ser151 the chain carries Phosphoserine. A helical transmembrane segment spans residues 154–175 (GFGLGVGIAFLATLVTQLLVYN). Residues 176–189 (GVYQYTSPDFLYVR) are Lumenal-facing. The helical transmembrane segment at 190–207 (SWLPCIFFAGGITMGNIG) threads the bilayer. The Cytoplasmic portion of the chain corresponds to 208–225 (RQLAMYECKVIAEKSHQE). At Cys215 the chain carries Cysteine sulfenic acid (-SOH); alternate. A Glycyl cysteine thioester (Cys-Gly) (interchain with G-Cter in ubiquitin); alternate cross-link involves residue Cys215. Residues 219–225 (AEKSHQE) carry the KxHxx motif.

The protein belongs to the INSIG family. In terms of assembly, interacts with SCAP; interaction is direct and only takes place in the presence of sterols; it prevents interaction between SCAP and the coat protein complex II (COPII). Associates with the SCAP-SREBP complex (composed of SCAP and SREBF1/SREBP1 or SREBF2/SREBP2); association is mediated via its interaction with SCAP and only takes place in the presence of sterols. Interacts with RNF139. Interacts with RNF145. Post-translationally, phosphorylation at Ser-151 by PCK1 reduces binding to oxysterol, disrupting the interaction between INSIG2 and SCAP, thereby promoting nuclear translocation of SREBP proteins (SREBF1/SREBP1 or SREBF2/SREBP2) and subsequent transcription of downstream lipogenesis-related genes. In terms of processing, polyubiquitinated by AMFR/gp78 at Cys-215 in some tissues such as adipose tissues, undifferentiated myoblasts and liver, leading to its degradation. In differentiated myotubes, Cys-215 oxidation prevents ubiquitination at the same site, resulting in protein stabilization. Oxidized at Cys-215 in differentiated myotubes, preventing ubiquitination at the same site, and resulting in protein stabilization.

It localises to the endoplasmic reticulum membrane. Functionally, oxysterol-binding protein that mediates feedback control of cholesterol synthesis by controlling both endoplasmic reticulum to Golgi transport of SCAP and degradation of HMGCR. Acts as a negative regulator of cholesterol biosynthesis by mediating the retention of the SCAP-SREBP complex in the endoplasmic reticulum, thereby blocking the processing of sterol regulatory element-binding proteins (SREBPs) SREBF1/SREBP1 and SREBF2/SREBP2. Binds oxysterol, including 22-hydroxycholesterol, 24-hydroxycholesterol, 25-hydroxycholesterol and 27-hydroxycholesterol, regulating interaction with SCAP and retention of the SCAP-SREBP complex in the endoplasmic reticulum. In presence of oxysterol, interacts with SCAP, retaining the SCAP-SREBP complex in the endoplasmic reticulum, thereby preventing SCAP from escorting SREBF1/SREBP1 and SREBF2/SREBP2 to the Golgi. Sterol deprivation or phosphorylation by PCK1 reduce oxysterol-binding, disrupting the interaction between INSIG2 and SCAP, thereby promoting Golgi transport of the SCAP-SREBP complex, followed by processing and nuclear translocation of SREBF1/SREBP1 and SREBF2/SREBP2. Also regulates cholesterol synthesis by regulating degradation of HMGCR: initiates the sterol-mediated ubiquitin-mediated endoplasmic reticulum-associated degradation (ERAD) of HMGCR via recruitment of the reductase to the ubiquitin ligase RNF139. The polypeptide is Insulin-induced gene 2 protein (Sus scrofa (Pig)).